Reading from the N-terminus, the 473-residue chain is Photosystem II CP43 reaction center protein (473 aa).

Residues 1-14 (MKTLYSLRRFYPVE) constitute a propeptide that is removed on maturation. An N-acetylthreonine modification is found at Thr15. Position 15 is a phosphothreonine (Thr15). 5 helical membrane-spanning segments follow: residues 69–93 (LFEV…PHLA), 134–155 (LLGP…KDRN), 178–200 (KALY…RKIT), 255–275 (KPFA…LSYS), and 291–312 (WFNN…ASQA). Glu367 is a binding site for [CaMn4O5] cluster. The helical transmembrane segment at 447–471 (RARAAAAGFEKGIDRDFEPVLSMTP) threads the bilayer.

Belongs to the PsbB/PsbC family. PsbC subfamily. PSII is composed of 1 copy each of membrane proteins PsbA, PsbB, PsbC, PsbD, PsbE, PsbF, PsbH, PsbI, PsbJ, PsbK, PsbL, PsbM, PsbT, PsbX, PsbY, PsbZ, Psb30/Ycf12, at least 3 peripheral proteins of the oxygen-evolving complex and a large number of cofactors. It forms dimeric complexes. Binds multiple chlorophylls and provides some of the ligands for the Ca-4Mn-5O cluster of the oxygen-evolving complex. It may also provide a ligand for a Cl- that is required for oxygen evolution. PSII binds additional chlorophylls, carotenoids and specific lipids. is required as a cofactor.

The protein localises to the plastid. Its subcellular location is the chloroplast thylakoid membrane. One of the components of the core complex of photosystem II (PSII). It binds chlorophyll and helps catalyze the primary light-induced photochemical processes of PSII. PSII is a light-driven water:plastoquinone oxidoreductase, using light energy to abstract electrons from H(2)O, generating O(2) and a proton gradient subsequently used for ATP formation. This chain is Photosystem II CP43 reaction center protein, found in Liriodendron tulipifera (Tuliptree).